The following is a 477-amino-acid chain: MQVLHVCSEMFPLLKTGGLADVIGALPAAQIADGVDARVLLPAFPDIRRGVTDAQVVSRRDTFAGHITLLFGHYNRVGIYLIDAPHLYDRPGSPYHDTNLFAYTDNVLRFALLGWVGAEMASGLDPFWRPDVVHAHDWHAGLAPAYLAARGRPAKSVFTVHNLAYQGMFYAHHMNDIQLPWSFFNIHGLEFNGQISFLKAGLYYADHITAVSPTYTREITEPQFAYGMEGLLQQRHREGRLSGVLNGVDEKIWSPETDLLLASRYTRDTLEDKAENKRQLQIAMGLKVDDKVPLFAVVSRLTSQKGLDLVLEALPGLLEQGGQLALLGAGDPVLQEGFLAAAAEYPGQVGVQIGYHEAFSHRIMGGADVILVPSRFEPCGLTQLYGLKYGTLPLVRRTGGLADTVSDCSLENLADGVASGFVFEDSNAWSLLRAIRRAFVLWSRPSLWRFVQRQAMAMDFSWQVAAKSYRELYYRLK.

ADP-alpha-D-glucose is bound at residue lysine 15.

The protein belongs to the glycosyltransferase 1 family. Bacterial/plant glycogen synthase subfamily.

The catalysed reaction is [(1-&gt;4)-alpha-D-glucosyl](n) + ADP-alpha-D-glucose = [(1-&gt;4)-alpha-D-glucosyl](n+1) + ADP + H(+). The protein operates within glycan biosynthesis; glycogen biosynthesis. Synthesizes alpha-1,4-glucan chains using ADP-glucose. This chain is Glycogen synthase, found in Shigella boydii serotype 18 (strain CDC 3083-94 / BS512).